Here is a 220-residue protein sequence, read N- to C-terminus: MGRRPARCYRQIKNKPYPKSRFCRGVPDPKIRIYDVGMKKKGVDEFPFCVHLVSWEKENVSSEALEAARIACNKYMTKFAGKDAFHLRVRVHPFHVLRINKMLSCAGADRLQTGMRGAFGKPQGVCARVAIGQVLLSVRCKDNNSHNAQEALRRAKFKFPGRQKIIVSRKWGFTKINRADYPRLKSENRILPDGVNAKLLGCHGRLANRKPGRAFIDAVA.

It belongs to the universal ribosomal protein uL16 family. Component of the small ribosomal subunit. Mature ribosomes consist of a small (40S) and a large (60S) subunit. The 40S subunit contains about 33 different proteins and 1 molecule of RNA (18S). The 60S subunit contains about 49 different proteins and 3 molecules of RNA (25S, 5.8S and 5S).

In Euphorbia esula (Leafy spurge), this protein is Large ribosomal subunit protein uL16 (RPL10).